Here is a 244-residue protein sequence, read N- to C-terminus: T-cell immunoreceptor with Ig and ITIM domains (244 aa).

Positions 1-21 (MRWCLLLIWAQGLRQAPLASG) are cleaved as a signal peptide. The Ig-like V-type domain occupies 22–124 (MMTGTIETTG…DGTYTGRIFL (103 aa)). Residues 22–141 (MMTGTIETTG…AEHGARFQIP (120 aa)) are Extracellular-facing. 2 N-linked (GlcNAc...) asparagine glycosylation sites follow: Asn32 and Asn101. The tract at residues 32-42 (NISAEKGGSII) is homodimerization. A disulfide bridge connects residues Cys45 and Cys108. Residues 142 to 162 (LLGAMAATLVVICTAVIVVVA) form a helical membrane-spanning segment. Residues 163–244 (LTRKKKALRI…GNCSFFTETG (82 aa)) lie on the Cytoplasmic side of the membrane. Tyr225 carries the phosphotyrosine modification. The ITIM motif signature appears at 229–234 (LSYRSL).

As to quaternary structure, homodimer in cis; binds with high affinity to PVR, forming a heterotetrameric assembly of two TIGIT and two PVR molecules. Binds with lower affinity to NECTIN2 and NECTIN3. Interacts with GRB2. Interacts with NECTIN4. As to expression, expressed at low levels on peripheral memory and regulatory CD4+ T-cells and NK cells and is up-regulated following activation of these cells (at protein level).

The protein localises to the cell membrane. In terms of biological role, inhibitory receptor that plays a role in the modulation of immune responses. Suppresses T-cell activation by promoting the generation of mature immunoregulatory dendritic cells. Upon binding to its ligands PVR/CD155 or NECTIN2/CD112, which are expressed on antigen-presenting cells, sends inhibitory signals to the T-cell or NK cell. Mechanistically, interaction with ligand leads to phosphorylation of the cytoplasmic tail by Src family tyrosine kinases such as FYN or LCK, allowing subsequent binding to adapter GRB2 and SHIP1/INPP5D. In turn, inhibits PI3K and MAPK signaling cascades. In addition, associates with beta-arrestin-2/ARRB2 to recruit SHIP1/INPP5D that suppresses autoubiquitination of TRAF6 and subsequently inhibits NF-kappa-B signaling pathway. Also acts as a receptor for NECTIN4 to inhibit NK cell cytotoxicity. This chain is T-cell immunoreceptor with Ig and ITIM domains (TIGIT), found in Homo sapiens (Human).